Consider the following 429-residue polypeptide: Glutamyl-tRNA reductase (429 aa).

Residues 50 to 53 (TCNR), serine 116, 121 to 123 (EPQ), and glutamine 127 each bind substrate. Cysteine 51 (nucleophile) is an active-site residue. Residue 196–201 (GAGEMA) participates in NADP(+) binding.

The protein belongs to the glutamyl-tRNA reductase family. As to quaternary structure, homodimer.

The enzyme catalyses (S)-4-amino-5-oxopentanoate + tRNA(Glu) + NADP(+) = L-glutamyl-tRNA(Glu) + NADPH + H(+). It functions in the pathway porphyrin-containing compound metabolism; protoporphyrin-IX biosynthesis; 5-aminolevulinate from L-glutamyl-tRNA(Glu): step 1/2. Functionally, catalyzes the NADPH-dependent reduction of glutamyl-tRNA(Glu) to glutamate 1-semialdehyde (GSA). In Thermodesulfovibrio yellowstonii (strain ATCC 51303 / DSM 11347 / YP87), this protein is Glutamyl-tRNA reductase.